We begin with the raw amino-acid sequence, 416 residues long: S-adenosylmethionine synthase (416 aa).

Residue H14 participates in ATP binding. D16 lines the Mg(2+) pocket. E42 serves as a coordination point for K(+). 2 residues coordinate L-methionine: E55 and Q98. Residues 98–108 (QSADINQGVDR) are flexible loop. ATP contacts are provided by residues 164–166 (DAK), 240–241 (KF), D249, 255–256 (RK), A272, and K276. Residue D249 participates in L-methionine binding. K280 is a binding site for L-methionine.

This sequence belongs to the AdoMet synthase family. As to quaternary structure, homotetramer; dimer of dimers. Requires Mg(2+) as cofactor. It depends on K(+) as a cofactor.

It localises to the cytoplasm. It carries out the reaction L-methionine + ATP + H2O = S-adenosyl-L-methionine + phosphate + diphosphate. The protein operates within amino-acid biosynthesis; S-adenosyl-L-methionine biosynthesis; S-adenosyl-L-methionine from L-methionine: step 1/1. Functionally, catalyzes the formation of S-adenosylmethionine (AdoMet) from methionine and ATP. The overall synthetic reaction is composed of two sequential steps, AdoMet formation and the subsequent tripolyphosphate hydrolysis which occurs prior to release of AdoMet from the enzyme. The sequence is that of S-adenosylmethionine synthase from Flavobacterium psychrophilum (strain ATCC 49511 / DSM 21280 / CIP 103535 / JIP02/86).